A 203-amino-acid polypeptide reads, in one-letter code: Outer-membrane lipoprotein carrier protein (203 aa).

The first 19 residues, 1–19, serve as a signal peptide directing secretion; that stretch reads MKKSIVVLFSAVLPFAVFA.

It belongs to the LolA family. As to quaternary structure, monomer.

It localises to the periplasm. Functionally, participates in the translocation of lipoproteins from the inner membrane to the outer membrane. Only forms a complex with a lipoprotein if the residue after the N-terminal Cys is not an aspartate (The Asp acts as a targeting signal to indicate that the lipoprotein should stay in the inner membrane). The chain is Outer-membrane lipoprotein carrier protein from Shewanella amazonensis (strain ATCC BAA-1098 / SB2B).